The following is a 413-amino-acid chain: Multifunctional CCA protein (413 aa).

Positions 8 and 11 each coordinate ATP. Positions 8 and 11 each coordinate CTP. Mg(2+)-binding residues include D21 and D23. Residues R91, R143, and R146 each contribute to the ATP site. R91, R143, and R146 together coordinate CTP. The HD domain occupies 232 to 333 (TGVHVMMVID…VRLLERADAL (102 aa)).

Belongs to the tRNA nucleotidyltransferase/poly(A) polymerase family. Bacterial CCA-adding enzyme type 1 subfamily. As to quaternary structure, monomer. Can also form homodimers and oligomers. It depends on Mg(2+) as a cofactor. The cofactor is Ni(2+).

It carries out the reaction a tRNA precursor + 2 CTP + ATP = a tRNA with a 3' CCA end + 3 diphosphate. The catalysed reaction is a tRNA with a 3' CCA end + 2 CTP + ATP = a tRNA with a 3' CCACCA end + 3 diphosphate. Functionally, catalyzes the addition and repair of the essential 3'-terminal CCA sequence in tRNAs without using a nucleic acid template. Adds these three nucleotides in the order of C, C, and A to the tRNA nucleotide-73, using CTP and ATP as substrates and producing inorganic pyrophosphate. tRNA 3'-terminal CCA addition is required both for tRNA processing and repair. Also involved in tRNA surveillance by mediating tandem CCA addition to generate a CCACCA at the 3' terminus of unstable tRNAs. While stable tRNAs receive only 3'-terminal CCA, unstable tRNAs are marked with CCACCA and rapidly degraded. The protein is Multifunctional CCA protein of Burkholderia pseudomallei (strain 668).